Reading from the N-terminus, the 470-residue chain is Amino-acid permease RocC (470 aa).

Helical transmembrane passes span 18–38 (FMIA…GFTI), 44–64 (LGAI…MLCL), 90–110 (GFMI…LELT), 119–139 (WLPS…IFLI), 159–179 (VAAI…LIDF), 196–216 (GLFP…NFSF), 243–263 (VIWR…AILP), 281–301 (IGIP…ILSV), 338–358 (ALLI…MAAE), 360–380 (VYLW…MSIC), 409–429 (LVPI…IFIP), and 433–453 (IGLY…HLSI).

Belongs to the amino acid-polyamine-organocation (APC) superfamily.

The protein resides in the cell membrane. Putative transport protein involved in arginine degradative pathway. Probably transports arginine or ornithine. The polypeptide is Amino-acid permease RocC (rocC) (Bacillus subtilis (strain 168)).